A 304-amino-acid polypeptide reads, in one-letter code: Homoserine kinase (304 aa).

86–96 (PLARGLGSSAA) is a binding site for ATP.

The protein belongs to the GHMP kinase family. Homoserine kinase subfamily.

It localises to the cytoplasm. The catalysed reaction is L-homoserine + ATP = O-phospho-L-homoserine + ADP + H(+). The protein operates within amino-acid biosynthesis; L-threonine biosynthesis; L-threonine from L-aspartate: step 4/5. In terms of biological role, catalyzes the ATP-dependent phosphorylation of L-homoserine to L-homoserine phosphate. The polypeptide is Homoserine kinase (Carboxydothermus hydrogenoformans (strain ATCC BAA-161 / DSM 6008 / Z-2901)).